Consider the following 319-residue polypeptide: Ciliary microtubule inner protein 2A (319 aa).

It belongs to the CIMIP2 family. As to quaternary structure, microtubule inner protein component of sperm flagellar doublet microtubules.

Its subcellular location is the cytoplasm. It localises to the cytoskeleton. The protein localises to the flagellum axoneme. In terms of biological role, microtubule inner protein (MIP) part of the dynein-decorated doublet microtubules (DMTs) in flagellum axoneme. Binds to the intra-tubulin interfaces. The chain is Ciliary microtubule inner protein 2A (Cimip2a) from Mus musculus (Mouse).